Consider the following 460-residue polypeptide: Ribulose bisphosphate carboxylase large chain (460 aa).

Lys-4 carries the post-translational modification N6,N6,N6-trimethyllysine. Positions 113 and 163 each coordinate substrate. Lys-165 functions as the Proton acceptor in the catalytic mechanism. Lys-167 contributes to the substrate binding site. Mg(2+)-binding residues include Lys-191, Asp-193, and Glu-194. Lys-191 carries the N6-carboxylysine modification. His-284 serves as the catalytic Proton acceptor. The substrate site is built by Arg-285, His-317, and Ser-369.

The protein belongs to the RuBisCO large chain family. Type I subfamily. As to quaternary structure, heterohexadecamer of 8 large chains and 8 small chains. The cofactor is Mg(2+).

Its subcellular location is the plastid. It localises to the chloroplast. It catalyses the reaction 2 (2R)-3-phosphoglycerate + 2 H(+) = D-ribulose 1,5-bisphosphate + CO2 + H2O. It carries out the reaction D-ribulose 1,5-bisphosphate + O2 = 2-phosphoglycolate + (2R)-3-phosphoglycerate + 2 H(+). In terms of biological role, ruBisCO catalyzes two reactions: the carboxylation of D-ribulose 1,5-bisphosphate, the primary event in carbon dioxide fixation, as well as the oxidative fragmentation of the pentose substrate in the photorespiration process. Both reactions occur simultaneously and in competition at the same active site. This chain is Ribulose bisphosphate carboxylase large chain, found in Cunninghamia lanceolata (China fir).